Consider the following 326-residue polypeptide: tRNA-modifying protein YgfZ (326 aa).

Positions 27 and 189 each coordinate folate.

Belongs to the tRNA-modifying YgfZ family.

The protein localises to the cytoplasm. Folate-binding protein involved in regulating the level of ATP-DnaA and in the modification of some tRNAs. It is probably a key factor in regulatory networks that act via tRNA modification, such as initiation of chromosomal replication. In Escherichia coli O17:K52:H18 (strain UMN026 / ExPEC), this protein is tRNA-modifying protein YgfZ.